Here is a 503-residue protein sequence, read N- to C-terminus: Transmembrane prolyl 4-hydroxylase (503 aa).

Residues 1 to 49 (MAAAVATVQRPEAETVEEASNLQWPLPPEHRPSGAATRPGDSEDAPVRP) form a disordered region. The Cytoplasmic portion of the chain corresponds to 1–61 (MAAAVATVQR…KPRGICSRAY (61 aa)). The chain crosses the membrane as a helical; Signal-anchor for type II membrane protein span at residues 62–82 (FLVLMVFVHLYLGNVLALLLF). Over 83–503 (VHYSNGDEST…RAYSDARVEL (421 aa)) the chain is Lumenal. The tract at residues 90–110 (ESTDPGPQRREQSPQPVPTLG) is disordered. EF-hand domains are found at residues 186-221 (AMQV…GNGR) and 225-260 (PENI…DFHK). Residues D199, N201, D203, R205, E210, D238, D240, D242, and E249 each contribute to the Ca(2+) site. The Fe2OG dioxygenase domain occupies 310–461 (EFSEPLQVVR…KWIANNWINV (152 aa)). Fe cation contacts are provided by H329 and D331. N-linked (GlcNAc...) asparagine glycans are attached at residues N349 and N369. Fe cation is bound at residue E375. An N-linked (GlcNAc...) asparagine glycan is attached at N383. K452 provides a ligand contact to 2-oxoglutarate.

In terms of assembly, homodimer. Fe(2+) serves as cofactor. L-ascorbate is required as a cofactor. Post-translationally, glycosylated. In terms of tissue distribution, highest expression levels are detected in the eye and brain, especially in the retinal epithelium cells and cortical neurons. Also expressed in skeletal muscle, lung, heart, adrenal gland, kidney, prostate, thyroid and testis.

The protein localises to the endoplasmic reticulum membrane. It catalyses the reaction L-prolyl-[hypoxia-inducible factor alpha subunit] + 2-oxoglutarate + O2 = trans-4-hydroxy-L-prolyl-[hypoxia-inducible factor alpha subunit] + succinate + CO2. Its function is as follows. Catalyzes the post-translational formation of 4-hydroxyproline in hypoxia-inducible factor (HIF) alpha proteins. Hydroxylates HIF1A at 'Pro-402' and 'Pro-564'. May function as a cellular oxygen sensor and, under normoxic conditions, may target HIF through the hydroxylation for proteasomal degradation via the von Hippel-Lindau ubiquitination complex. This chain is Transmembrane prolyl 4-hydroxylase (P4htm), found in Mus musculus (Mouse).